Reading from the N-terminus, the 107-residue chain is Large ribosomal subunit protein uL23 (107 aa).

Belongs to the universal ribosomal protein uL23 family. Part of the 50S ribosomal subunit. Contacts protein L29, and trigger factor when it is bound to the ribosome.

Its function is as follows. One of the early assembly proteins it binds 23S rRNA. One of the proteins that surrounds the polypeptide exit tunnel on the outside of the ribosome. Forms the main docking site for trigger factor binding to the ribosome. The sequence is that of Large ribosomal subunit protein uL23 from Rhodopirellula baltica (strain DSM 10527 / NCIMB 13988 / SH1).